The primary structure comprises 78 residues: Conotoxin ArMKLT2-0312 (78 aa).

The signal sequence occupies residues 1–22 (MKLTCVLIIAVLFLTACQLITA). The propeptide occupies 23–45 (DYSRDKQEYRAVRLRDAMRYSRV). Gln48 is modified (pyrrolidone carboxylic acid). 3 disulfide bridges follow: Cys49/Cys62, Cys56/Cys67, and Cys61/Cys75.

This sequence belongs to the conotoxin O1 superfamily. Expressed by the venom duct.

It is found in the secreted. The protein is Conotoxin ArMKLT2-0312 of Conus arenatus (Sand-dusted cone).